Reading from the N-terminus, the 49-residue chain is Unknown protein from spot 75 of 2D-PAGE of etiolated coleoptile (49 aa).

The protein is Unknown protein from spot 75 of 2D-PAGE of etiolated coleoptile of Zea mays (Maize).